Reading from the N-terminus, the 442-residue chain is ATP-dependent protease ATPase subunit HslU (442 aa).

Residues isoleucine 18 and 60–65 contribute to the ATP site; that span reads GVGKTE. The segment at 137–156 is disordered; it reads PKPKNDWESTETDSSSNTRQ. Residues aspartate 255, glutamate 320, and arginine 392 each contribute to the ATP site.

The protein belongs to the ClpX chaperone family. HslU subfamily. A double ring-shaped homohexamer of HslV is capped on each side by a ring-shaped HslU homohexamer. The assembly of the HslU/HslV complex is dependent on binding of ATP.

It is found in the cytoplasm. In terms of biological role, ATPase subunit of a proteasome-like degradation complex; this subunit has chaperone activity. The binding of ATP and its subsequent hydrolysis by HslU are essential for unfolding of protein substrates subsequently hydrolyzed by HslV. HslU recognizes the N-terminal part of its protein substrates and unfolds these before they are guided to HslV for hydrolysis. The chain is ATP-dependent protease ATPase subunit HslU from Shewanella baltica (strain OS155 / ATCC BAA-1091).